A 221-amino-acid chain; its full sequence is Large ribosomal subunit protein uL3 (221 aa).

Belongs to the universal ribosomal protein uL3 family. As to quaternary structure, part of the 50S ribosomal subunit. Forms a cluster with proteins L14 and L19.

One of the primary rRNA binding proteins, it binds directly near the 3'-end of the 23S rRNA, where it nucleates assembly of the 50S subunit. The protein is Large ribosomal subunit protein uL3 of Chlamydia abortus (strain DSM 27085 / S26/3) (Chlamydophila abortus).